The chain runs to 192 residues: Inner membrane protein YohD (192 aa).

Residues 1–40 (MDLNTLISQYGYAALVIGSLAEGETVTLLGGVAAHQGLLK) lie on the Periplasmic side of the membrane. A helical membrane pass occupies residues 41-61 (FPLVVLSVALGGMIGDQVLYL). The Cytoplasmic portion of the chain corresponds to 62–121 (CGRRFGGKLLRRFSKHQDKIERAQKLIQRHPYLFVIGTRFMYGFRVIGPTLIGASQLPPK). Residues 122–142 (IFLPLNILGAFAWALIFTTIG) traverse the membrane as a helical segment. The Periplasmic portion of the chain corresponds to 143-159 (YAGGQVIAPWLHNLDQH). The helical transmembrane segment at 160–180 (LKHWVWLILVVVLVVGVRWWL) threads the bilayer. Over 181-192 (KRRGKKKPDHQA) the chain is Cytoplasmic.

This sequence belongs to the DedA family.

It localises to the cell inner membrane. The polypeptide is Inner membrane protein YohD (yohD) (Escherichia coli (strain K12)).